The following is an 858-amino-acid chain: Adenylate cyclase, germination specific (858 aa).

The Cytoplasmic portion of the chain corresponds to 1–18; sequence MKKTFVKILSKSYVEGYP. Residues 19–41 traverse the membrane as a helical; Signal-anchor for type II membrane protein segment; that stretch reads VGFFIGLIILAIFGSMVCIFSFM. At 42-858 the chain is on the extracellular side; sequence HYSEEENSNI…DENVESKKNK (817 aa). The 232-residue stretch at 86-317 folds into the CHASE domain; that stretch reads VNPNFDRNDF…DCVLKLWIFT (232 aa). The 131-residue stretch at 396 to 526 folds into the Guanylate cyclase domain; the sequence is CVFFLDIAGF…DTVNVASRME (131 aa). Residues aspartate 401, isoleucine 402, and aspartate 445 each contribute to the Mg(2+) site. 3 disordered regions span residues 650–691, 767–803, and 827–858; these read YYYH…YHDT, SDNV…STNE, and ENCD…KKNK. 3 stretches are compositionally biased toward low complexity: residues 767–778, 788–797, and 834–849; these read SDNVNNYENNNN, GDNNNINDNN, and DNNN…NNND.

This sequence belongs to the adenylyl cyclase class-4/guanylyl cyclase family.

The protein localises to the membrane. It catalyses the reaction ATP = 3',5'-cyclic AMP + diphosphate. Its activity is regulated as follows. Insensitive to guanine nucleotides. In terms of biological role, has a large extracellular domain which may be involved in the recognition of an extracellular signal present during germination, leading to activation or inhibition of cAMP synthesis by the cytoplasmic domain. The protein is Adenylate cyclase, germination specific (acgA) of Dictyostelium discoideum (Social amoeba).